The following is a 468-amino-acid chain: Cysteine--tRNA ligase (468 aa).

Cysteine 28 provides a ligand contact to Zn(2+). A 'HIGH' region motif is present at residues 30-40 (PTVYNYIHIGN). Zn(2+)-binding residues include cysteine 212, histidine 237, and glutamate 241. The short motif at 271–275 (KMSKS) is the 'KMSKS' region element. Lysine 274 contacts ATP.

The protein belongs to the class-I aminoacyl-tRNA synthetase family. As to quaternary structure, monomer. Zn(2+) serves as cofactor.

Its subcellular location is the cytoplasm. It catalyses the reaction tRNA(Cys) + L-cysteine + ATP = L-cysteinyl-tRNA(Cys) + AMP + diphosphate. This is Cysteine--tRNA ligase from Latilactobacillus sakei subsp. sakei (strain 23K) (Lactobacillus sakei subsp. sakei).